We begin with the raw amino-acid sequence, 428 residues long: Secernin-2 (428 aa).

Cysteine 10 is a catalytic residue.

This sequence belongs to the peptidase C69 family. Secernin subfamily.

In Xenopus laevis (African clawed frog), this protein is Secernin-2 (scrn2).